Reading from the N-terminus, the 968-residue chain is Probable histidine kinase 1 (968 aa).

Coiled-coil stretches lie at residues Leu-89–Glu-120 and Lys-169–Thr-204. The Histidine kinase domain occupies Thr-372–Ile-655. His-375 bears the Phosphohistidine; by autocatalysis mark. The segment at Ser-737–Lys-757 is disordered. The span at Thr-738–Arg-754 shows a compositional bias: polar residues. Positions Lys-818–Leu-965 constitute a Response regulatory domain. Asp-867 carries the post-translational modification 4-aspartylphosphate.

In terms of processing, activation probably requires a transfer of a phosphate group between a His in the transmitter domain and an Asp of the receiver domain.

The enzyme catalyses ATP + protein L-histidine = ADP + protein N-phospho-L-histidine.. Its function is as follows. Cytokinin receptor related to bacterial two-component regulators. Functions as a histidine kinase and transmits the stress signal to a downstream MAPK cascade. The sequence is that of Probable histidine kinase 1 from Oryza sativa subsp. indica (Rice).